Consider the following 315-residue polypeptide: Shiga toxin subunit A (315 aa).

The first 22 residues, 1–22 (MKIIIFRVLTFFFVIFSVNVVA), serve as a signal peptide directing secretion. The segment at 23-273 (KEFTLDFSTA…CHHHASRVAR (251 aa)) is A1. E189 is a catalytic residue. A disulfide bridge links C264 with C283. The tract at residues 274 to 315 (MASDEFPSMCPADGRVRGITHNKILWDSSTLGAILMRRTISS) is A2.

This sequence belongs to the ribosome-inactivating protein family. As to quaternary structure, shiga toxin contains a single subunit A and five copies of subunit B.

It catalyses the reaction Endohydrolysis of the N-glycosidic bond at one specific adenosine on the 28S rRNA.. Its function is as follows. The A subunit is responsible for inhibiting protein synthesis through the catalytic inactivation of 60S ribosomal subunits. After endocytosis, the A subunit is cleaved by furin in two fragments, A1 and A2: A1 is the catalytically active fragment, and A2 is essential for holotoxin assembly with the B subunits. This is Shiga toxin subunit A (stxA) from Shigella sonnei (Shigella sonnei bacteriophage 7888).